The chain runs to 846 residues: uncharacterized protein (846 aa).

WD repeat units follow at residues 88–129 (TKHI…LLYD), 132–172 (EHSR…STIT), 175–215 (GNSE…LPFL), 219–258 (AHNG…KKSL), 262–309 (NNVS…IPYR), and 313–348 (CHDS…NAFN). Residues 541-560 (PREASTPSESSNSSIESEDN) form a disordered region. Residues 544 to 555 (ASTPSESSNSSI) show a composition bias toward low complexity. The WD 7 repeat unit spans residues 624 to 663 (FHRSSVTSASIKSREAVLSAGNSSRRASIFLDQLSLHGDT).

This is an uncharacterized protein from Schizosaccharomyces pombe (strain 972 / ATCC 24843) (Fission yeast).